Here is a 360-residue protein sequence, read N- to C-terminus: Peptide chain release factor 1 (360 aa).

N5-methylglutamine is present on Gln234.

Belongs to the prokaryotic/mitochondrial release factor family. In terms of processing, methylated by PrmC. Methylation increases the termination efficiency of RF1.

Its subcellular location is the cytoplasm. Peptide chain release factor 1 directs the termination of translation in response to the peptide chain termination codons UAG and UAA. This is Peptide chain release factor 1 from Renibacterium salmoninarum (strain ATCC 33209 / DSM 20767 / JCM 11484 / NBRC 15589 / NCIMB 2235).